Consider the following 338-residue polypeptide: Lumican (338 aa).

The signal sequence occupies residues 1 to 18; it reads MNVCTFTLVLALVGSVSG. Gln19 is subject to Pyrrolidone carboxylic acid. Sulfotyrosine occurs at positions 20, 21, 23, and 30. Residues 28 to 66 form the LRRNT domain; it reads FMYGELSPNCAPECNCPHSYPTAMYCDDLKLKSVPMVPP. LRR repeat units follow at residues 67-88, 91-114, 117-137, 138-159, 160-181, 185-205, 206-227, and 230-250; these read GIKY…AFEN, DLQW…VFSK, QLKK…PLPK, SLQD…DGLV, NLTF…ASLK, SLEY…GLPT, SLLT…YFNR, and GLQY…PGNS. A glycan (N-linked (GlcNAc...) (keratan sulfate) asparagine) is linked at Asn88. A glycan (N-linked (GlcNAc...) (keratan sulfate) asparagine) is linked at Asn127. Asn160 carries N-linked (GlcNAc...) (keratan sulfate) asparagine glycosylation. Asn252 carries N-linked (GlcNAc...) (keratan sulfate) asparagine glycosylation. 2 LRR repeats span residues 255-276 and 277-296; these read SLLE…NENL and ENYY…SFCK. Cys295 and Cys328 form a disulfide bridge. Phosphoserine is present on Ser304. Residues 305-326 form an LRR 11 repeat; sequence KIKHLRLDGNPLTQSSLPPDMY.

Belongs to the small leucine-rich proteoglycan (SLRP) family. SLRP class II subfamily. Binds to laminin. Post-translationally, contains keratan sulfate.

The protein localises to the secreted. Its subcellular location is the extracellular space. It localises to the extracellular matrix. The sequence is that of Lumican (Lum) from Rattus norvegicus (Rat).